Reading from the N-terminus, the 711-residue chain is Long-chain-fatty-acid--CoA ligase 4 (711 aa).

The chain crosses the membrane as a helical; Signal-anchor for type III membrane protein span at residues 8–28 (LTIILLPVHLLITIYSALIFI). Topologically, residues 29–711 (PWYFLTNAKK…KDIERMYGGK (683 aa)) are cytoplasmic. Serine 447 is subject to Phosphoserine.

It belongs to the ATP-dependent AMP-binding enzyme family. Mg(2+) is required as a cofactor. Abundant in steroidogenic tissues, also found in the kidney, brain and liver.

The protein localises to the mitochondrion outer membrane. It localises to the peroxisome membrane. It is found in the microsome membrane. Its subcellular location is the endoplasmic reticulum membrane. The protein resides in the cell membrane. It catalyses the reaction a long-chain fatty acid + ATP + CoA = a long-chain fatty acyl-CoA + AMP + diphosphate. The catalysed reaction is (5Z,8Z,11Z,14Z)-eicosatetraenoate + ATP + CoA = (5Z,8Z,11Z,14Z)-eicosatetraenoyl-CoA + AMP + diphosphate. The enzyme catalyses 15-hydroxy-(5Z,8Z,11Z,13E)-eicosatetraenoate + ATP + CoA = 15-hydroxy-(5Z,8Z,11Z,13E)-eicosatetraenoyl-CoA + AMP + diphosphate. It carries out the reaction 12-hydroxy-(5Z,8Z,10E,14Z)-eicosatetraenoate + ATP + CoA = 12-hydroxy-(5Z,8Z,10E,14Z)-eicosatetraenoyl-CoA + AMP + diphosphate. It catalyses the reaction 5-hydroxy-(6E,8Z,11Z,14Z)-eicosatetraenoate + ATP + CoA = 5-hydroxy-(6E,8Z,11Z,14Z)-eicosatetraenoyl-CoA + AMP + diphosphate. The catalysed reaction is 5,6-epoxy-(8Z,11Z,14Z)-eicosatrienoate + ATP + CoA = 5,6-epoxy-(8Z,11Z,14Z)-eicosatrienoyl-CoA + AMP + diphosphate. The enzyme catalyses 14,15-epoxy-(5Z,8Z,11Z)-eicosatrienoate + ATP + CoA = 14,15-epoxy-(5Z,8Z,11Z)-eicosatrienoyl-CoA + AMP + diphosphate. It carries out the reaction 11,12-epoxy-(5Z,8Z,14Z)-eicosatrienoate + ATP + CoA = 11,12-epoxy-(5Z,8Z,14Z)-eicosatrienoyl-CoA + AMP + diphosphate. It catalyses the reaction 8,9-epoxy-(5Z,11Z,14Z)-eicosatrienoate + ATP + CoA = 8,9-epoxy-(5Z,11Z,14Z)-eicosatrienoyl-CoA + AMP + diphosphate. The catalysed reaction is hexadecanoate + ATP + CoA = hexadecanoyl-CoA + AMP + diphosphate. The enzyme catalyses (E)-hexadec-2-enoate + ATP + CoA = (2E)-hexadecenoyl-CoA + AMP + diphosphate. With respect to regulation, both triacsin C and rosiglitazone inhibit arachidonoyl-CoA ligase activity. Functionally, catalyzes the conversion of long-chain fatty acids to their active form acyl-CoA for both synthesis of cellular lipids, and degradation via beta-oxidation. Preferentially activates arachidonate and eicosapentaenoate as substrates. Preferentially activates 8,9-EET &gt; 14,15-EET &gt; 5,6-EET &gt; 11,12-EET. Modulates glucose-stimulated insulin secretion by regulating the levels of unesterified EETs. Modulates prostaglandin E2 secretion. This is Long-chain-fatty-acid--CoA ligase 4 (Acsl4) from Mus musculus (Mouse).